The following is a 221-amino-acid chain: ATP-dependent dethiobiotin synthetase BioD (221 aa).

ATP is bound at residue 13–18 (DIGKTY). Thr-17 provides a ligand contact to Mg(2+). Lys-38 is a catalytic residue. Ser-42 lines the substrate pocket. Residues Asp-51, 112–115 (EGSG), and 176–177 (NR) contribute to the ATP site. Mg(2+)-binding residues include Asp-51 and Glu-112.

Belongs to the dethiobiotin synthetase family. As to quaternary structure, homodimer. Requires Mg(2+) as cofactor.

The protein resides in the cytoplasm. It carries out the reaction (7R,8S)-7,8-diammoniononanoate + CO2 + ATP = (4R,5S)-dethiobiotin + ADP + phosphate + 3 H(+). The protein operates within cofactor biosynthesis; biotin biosynthesis; biotin from 7,8-diaminononanoate: step 1/2. Its function is as follows. Catalyzes a mechanistically unusual reaction, the ATP-dependent insertion of CO2 between the N7 and N8 nitrogen atoms of 7,8-diaminopelargonic acid (DAPA, also called 7,8-diammoniononanoate) to form a ureido ring. This Brachyspira hyodysenteriae (strain ATCC 49526 / WA1) protein is ATP-dependent dethiobiotin synthetase BioD.